A 137-amino-acid polypeptide reads, in one-letter code: Protein MesC (137 aa).

This is Protein MesC (mesC) from Leuconostoc mesenteroides.